A 130-amino-acid polypeptide reads, in one-letter code: Large ribosomal subunit protein bL19 (130 aa).

It belongs to the bacterial ribosomal protein bL19 family.

In terms of biological role, this protein is located at the 30S-50S ribosomal subunit interface and may play a role in the structure and function of the aminoacyl-tRNA binding site. This is Large ribosomal subunit protein bL19 from Mycoplasma mycoides subsp. mycoides SC (strain CCUG 32753 / NCTC 10114 / PG1).